The primary structure comprises 128 residues: MAAADVAYAPPMKSGKIGFESSQEVQHRIRITLSSKSVKNLEKVCGDLVKGAKDKSLKVKGPVRMPTKVLHITTRKSPCGEGTNTWDRFEMRVHKRVIDLVSSADVVKQITSITIEPGVEVEVTISDQ.

This sequence belongs to the universal ribosomal protein uS10 family.

In Oryza sativa subsp. japonica (Rice), this protein is Small ribosomal subunit protein uS10 (RPS20).